A 261-amino-acid polypeptide reads, in one-letter code: Serine/arginine-rich splicing factor 12 (261 aa).

One can recognise an RRM domain in the interval 10-88; the sequence is TSLFIRNVAD…RQIEIQFAQG (79 aa). The segment at 86–261 is disordered; sequence AQGDRKTPGQ…SRSYRHKNSW (176 aa). Residues 88–109 show a composition bias toward basic and acidic residues; the sequence is GDRKTPGQMKSKERHPCSPSDH. Composition is skewed to basic residues over residues 110–122 and 178–191; these read RRSR…RTRS and GRSR…RSKS. Low complexity predominate over residues 192 to 209; it reads IGKSQSSSPQKQTSSGTK. A compositionally biased stretch (polar residues) spans 230 to 239; it reads GYTNSETKVQ. The span at 240–261 shows a compositional bias: basic residues; it reads TAKHSHFRSHSRSRSYRHKNSW.

The protein belongs to the splicing factor SR family. Expressed in testis.

It is found in the nucleus. Its function is as follows. Splicing factor that seems to antagonize SR proteins in pre-mRNA splicing regulation. This Homo sapiens (Human) protein is Serine/arginine-rich splicing factor 12 (SRSF12).